Here is a 433-residue protein sequence, read N- to C-terminus: sn-glycerol-3-phosphate-binding periplasmic protein UgpB (433 aa).

A signal peptide spans 1–25 (MFTRLITTSVLTGAIALTIGSQAFA). The sn-glycerol 3-phosphate site is built by tyrosine 67, aspartate 91, serine 146, serine 273, glycine 307, tyrosine 346, and arginine 397.

It belongs to the bacterial solute-binding protein 1 family. The complex is composed of two ATP-binding proteins (UgpC), two transmembrane proteins (UgpA and UgpE) and a solute-binding protein (UgpB).

The protein resides in the periplasm. Functionally, part of the ABC transporter complex UgpBAEC involved in sn-glycerol-3-phosphate (G3P) import. Binds G3P. This Brucella abortus (strain 2308) protein is sn-glycerol-3-phosphate-binding periplasmic protein UgpB (ugpB).